A 426-amino-acid chain; its full sequence is Histidine--tRNA ligase (426 aa).

It belongs to the class-II aminoacyl-tRNA synthetase family. In terms of assembly, homodimer.

It is found in the cytoplasm. It catalyses the reaction tRNA(His) + L-histidine + ATP = L-histidyl-tRNA(His) + AMP + diphosphate + H(+). The sequence is that of Histidine--tRNA ligase from Streptococcus equi subsp. zooepidemicus (strain MGCS10565).